The primary structure comprises 95 residues: Large ribosomal subunit protein uL23 (95 aa).

The protein belongs to the universal ribosomal protein uL23 family. Part of the 50S ribosomal subunit. Contacts protein L29, and trigger factor when it is bound to the ribosome.

Functionally, one of the early assembly proteins it binds 23S rRNA. One of the proteins that surrounds the polypeptide exit tunnel on the outside of the ribosome. Forms the main docking site for trigger factor binding to the ribosome. The protein is Large ribosomal subunit protein uL23 of Deinococcus deserti (strain DSM 17065 / CIP 109153 / LMG 22923 / VCD115).